The following is a 1206-amino-acid chain: Cilia- and flagella-associated protein 157 (1206 aa).

4 disordered regions span residues 26 to 52, 79 to 109, 125 to 173, and 327 to 405; these read GGGG…GRDL, RAEQ…QQAP, EATC…RGPL, and GSGK…EEDW. Composition is skewed to low complexity over residues 88 to 109, 156 to 173, and 385 to 397; these read GRPQ…QQAP, AKAV…RGPL, and QQLG…QPGG. Coiled-coil stretches lie at residues 634 to 732, 799 to 833, and 876 to 903; these read TDEL…KTKD, TEKL…LARR, and LHLA…KTAE. 3 disordered regions span residues 936–990, 1011–1072, and 1168–1206; these read TTTN…DELS, LSHG…GATS, and PWGK…SLKV. 2 stretches are compositionally biased toward low complexity: residues 951–973 and 1014–1035; these read AGAD…SSSA and GPLS…ALAG. Composition is skewed to gly residues over residues 1037 to 1046 and 1058 to 1067; these read WGPGSPGGSR and SAGGMGGPQG. Composition is skewed to polar residues over residues 1175–1184 and 1193–1206; these read QQPLTTTKHS and GPSN…SLKV.

This sequence belongs to the CFAP157 family.

The protein localises to the cell projection. It localises to the cilium. It is found in the flagellum. This chain is Cilia- and flagella-associated protein 157, found in Chlamydomonas reinhardtii (Chlamydomonas smithii).